Here is an 86-residue protein sequence, read N- to C-terminus: MATDAQMAQVAELEVEMMSDMYRRMTNSCQAKCIATAFRESELTKGEAVCLDRCVAKYLDVHEKLGKRLTSMSQGDEAALQKIAQQ.

The Twin CX3C motif motif lies at 29–54 (CQAKCIATAFRESELTKGEAVCLDRC). Disulfide bonds link Cys29–Cys54 and Cys33–Cys50.

This sequence belongs to the small Tim family. In terms of assembly, heterohexamer; composed of 3 copies of tim-9/tin-9.1 and 3 copies of tim-10/tin-10, named soluble 70 kDa complex. The complex associates with the tim-22 component of the TIM22 complex. Interacts with multi-pass transmembrane proteins in transit.

The protein resides in the mitochondrion inner membrane. Functionally, mitochondrial intermembrane chaperone that participates in the import and insertion of multi-pass transmembrane proteins into the mitochondrial inner membrane. May also be required for the transfer of beta-barrel precursors from the TOM complex to the sorting and assembly machinery (SAM complex) of the outer membrane. Acts as a chaperone-like protein that protects the hydrophobic precursors from aggregation and guide them through the mitochondrial intermembrane space. The polypeptide is Mitochondrial import inner membrane translocase subunit Tim10 (tin-10) (Caenorhabditis elegans).